Here is a 236-residue protein sequence, read N- to C-terminus: Ribonuclease 3 (236 aa).

The RNase III domain maps to 7–136 (KSYILKKFNI…FIGALYLDQG (130 aa)). Residue glutamate 49 coordinates Mg(2+). Residue aspartate 53 is part of the active site. Mg(2+) contacts are provided by aspartate 122 and glutamate 125. Glutamate 125 is an active-site residue. The 71-residue stretch at 162–232 (DFKSRLQERL…ARAALKILED (71 aa)) folds into the DRBM domain.

Belongs to the ribonuclease III family. As to quaternary structure, homodimer. Mg(2+) serves as cofactor.

Its subcellular location is the cytoplasm. The enzyme catalyses Endonucleolytic cleavage to 5'-phosphomonoester.. In terms of biological role, digests double-stranded RNA. Involved in the processing of primary rRNA transcript to yield the immediate precursors to the large and small rRNAs (23S and 16S). Processes some mRNAs, and tRNAs when they are encoded in the rRNA operon. Processes pre-crRNA and tracrRNA of type II CRISPR loci if present in the organism. In Leuconostoc mesenteroides subsp. mesenteroides (strain ATCC 8293 / DSM 20343 / BCRC 11652 / CCM 1803 / JCM 6124 / NCDO 523 / NBRC 100496 / NCIMB 8023 / NCTC 12954 / NRRL B-1118 / 37Y), this protein is Ribonuclease 3.